A 369-amino-acid chain; its full sequence is Serine/threonine-protein kinase srb10 (369 aa).

A Protein kinase domain is found at 5–319; that stretch reads YKIIGFISSG…AKQALEHVFF (315 aa). Residues 11 to 19 and lysine 36 each bind ATP; that span reads ISSGTYGKV. The Proton acceptor role is filled by aspartate 140.

This sequence belongs to the protein kinase superfamily. CMGC Ser/Thr protein kinase family. CDC2/CDKX subfamily. As to quaternary structure, component of the Cdk8 module of the Mediator complex. The Cdk8 module is composed of srb8, srb9, srb10 and srb11. Interacts with med17 and med18.

The protein localises to the nucleus. It carries out the reaction L-seryl-[protein] + ATP = O-phospho-L-seryl-[protein] + ADP + H(+). It catalyses the reaction L-threonyl-[protein] + ATP = O-phospho-L-threonyl-[protein] + ADP + H(+). The catalysed reaction is [DNA-directed RNA polymerase] + ATP = phospho-[DNA-directed RNA polymerase] + ADP + H(+). In terms of biological role, catalytic component of the Cdk8 module/Srb8-11 module which is a regulatory module of the Mediator complex that regulates basal RNA polymerase II transcription. The Cdk8 module may sterically hinder the interaction between Mediator and RNA polymerase II leading to transcriptional repression of a subset of genes regulated by Mediator. The polypeptide is Serine/threonine-protein kinase srb10 (srb10) (Schizosaccharomyces pombe (strain 972 / ATCC 24843) (Fission yeast)).